Here is a 554-residue protein sequence, read N- to C-terminus: Arginine--tRNA ligase (554 aa).

A 'HIGH' region motif is present at residues 129 to 139 (ANPTGPLHIGH).

Belongs to the class-I aminoacyl-tRNA synthetase family. In terms of assembly, monomer.

It is found in the cytoplasm. It carries out the reaction tRNA(Arg) + L-arginine + ATP = L-arginyl-tRNA(Arg) + AMP + diphosphate. This chain is Arginine--tRNA ligase, found in Syntrophotalea carbinolica (strain DSM 2380 / NBRC 103641 / GraBd1) (Pelobacter carbinolicus).